Here is a 359-residue protein sequence, read N- to C-terminus: Putative transposase y4uE (359 aa).

Disordered regions lie at residues 1–31 (MGDGPNWRSLPEPSRFVGSDPSPPVPRAPGG) and 318–359 (HYAH…EEAA).

It belongs to the transposase 9 family.

In Sinorhizobium fredii (strain NBRC 101917 / NGR234), this protein is Putative transposase y4uE.